We begin with the raw amino-acid sequence, 593 residues long: Isocitrate dehydrogenase kinase/phosphatase (593 aa).

ATP-binding positions include 324-330 (APGIRGL) and Lys345. The active site involves Asp380.

Belongs to the AceK family.

The protein resides in the cytoplasm. It catalyses the reaction L-seryl-[isocitrate dehydrogenase] + ATP = O-phospho-L-seryl-[isocitrate dehydrogenase] + ADP + H(+). Bifunctional enzyme which can phosphorylate or dephosphorylate isocitrate dehydrogenase (IDH) on a specific serine residue. This is a regulatory mechanism which enables bacteria to bypass the Krebs cycle via the glyoxylate shunt in response to the source of carbon. When bacteria are grown on glucose, IDH is fully active and unphosphorylated, but when grown on acetate or ethanol, the activity of IDH declines drastically concomitant with its phosphorylation. In Dechloromonas aromatica (strain RCB), this protein is Isocitrate dehydrogenase kinase/phosphatase.